A 353-amino-acid polypeptide reads, in one-letter code: Nicotinate-nucleotide--dimethylbenzimidazole phosphoribosyltransferase (353 aa).

E318 acts as the Proton acceptor in catalysis.

This sequence belongs to the CobT family.

The enzyme catalyses 5,6-dimethylbenzimidazole + nicotinate beta-D-ribonucleotide = alpha-ribazole 5'-phosphate + nicotinate + H(+). It participates in nucleoside biosynthesis; alpha-ribazole biosynthesis; alpha-ribazole from 5,6-dimethylbenzimidazole: step 1/2. Catalyzes the synthesis of alpha-ribazole-5'-phosphate from nicotinate mononucleotide (NAMN) and 5,6-dimethylbenzimidazole (DMB). The protein is Nicotinate-nucleotide--dimethylbenzimidazole phosphoribosyltransferase of Roseiflexus sp. (strain RS-1).